Consider the following 512-residue polypeptide: Cytochrome P450 monooxygenase paxQ (512 aa).

The next 2 membrane-spanning stretches (helical) occupy residues 3 to 23 and 35 to 55; these read FVLS…LVSI and LQIP…ISAL. A heme-binding site is contributed by cysteine 453.

The protein belongs to the cytochrome P450 family. Heme serves as cofactor.

Its subcellular location is the membrane. Its pathway is secondary metabolite biosynthesis. Cytochrome P450 monooxygenase; part of the gene cluster that mediates the biosynthesis of paxilline, a mycotoxin that acts as an inhibitor of mammalian maxi-K channels. PaxG, the geranylgeranyl diphosphate (GGPP) synthase is proposed to catalyze the first step in paxilline biosynthesis. Condensation of indole-3-glycerol phosphate with GGPP by paxC then forms 3-geranylgeranylindole (3-GGI), followed by epoxidation and cyclization of this intermediate (by paxM and paxB) to form paspaline. Paspaline is subsequently converted to 13-desoxypaxilline by paxP, the latter being then converted to paxilline by paxQ. Finally paxilline can be mono- and di-prenylated by paxD. PaxQ can also utilized beta-paxitriol and alpha-PC-M6 as substrates converting them to alpha-paxitriol. In Penicillium paxilli, this protein is Cytochrome P450 monooxygenase paxQ.